We begin with the raw amino-acid sequence, 197 residues long: Endoribonuclease YbeY (197 aa).

The Zn(2+) site is built by His156, His160, and His166.

This sequence belongs to the endoribonuclease YbeY family. It depends on Zn(2+) as a cofactor.

It localises to the cytoplasm. Functionally, single strand-specific metallo-endoribonuclease involved in late-stage 70S ribosome quality control and in maturation of the 3' terminus of the 16S rRNA. This is Endoribonuclease YbeY from Cupriavidus metallidurans (strain ATCC 43123 / DSM 2839 / NBRC 102507 / CH34) (Ralstonia metallidurans).